Here is an 85-residue protein sequence, read N- to C-terminus: U4-theraphotoxin-Hhn1a (85 aa).

The first 22 residues, 1-22 (MKVTLIAILTCATVLVLHTTAA), serve as a signal peptide directing secretion. The propeptide occupies 23-48 (EELEAESQLMEVGMPDTELAAVDEER). 3 disulfides stabilise this stretch: cysteine 52-cysteine 66, cysteine 56-cysteine 77, and cysteine 71-cysteine 82.

Belongs to the neurotoxin 12 (Hwtx-2) family. 02 (Hwtx-2) subfamily. Monomer. Expressed by the venom gland.

The protein localises to the secreted. Functionally, neurotoxin active on both insects and mammals. This chain is U4-theraphotoxin-Hhn1a, found in Cyriopagopus hainanus (Chinese bird spider).